Reading from the N-terminus, the 134-residue chain is Cytochrome b (134 aa).

3 consecutive transmembrane segments (helical) span residues 33 to 53 (FGSL…FLAM), 77 to 98 (WILR…FLHV), and 113 to 133 (WNIG…GYVL). Positions 83 and 97 each coordinate heme b.

This sequence belongs to the cytochrome b family. In terms of assembly, the cytochrome bc1 complex contains 11 subunits: 3 respiratory subunits (MT-CYB, CYC1 and UQCRFS1), 2 core proteins (UQCRC1 and UQCRC2) and 6 low-molecular weight proteins (UQCRH/QCR6, UQCRB/QCR7, UQCRQ/QCR8, UQCR10/QCR9, UQCR11/QCR10 and a cleavage product of UQCRFS1). This cytochrome bc1 complex then forms a dimer. Requires heme b as cofactor.

The protein resides in the mitochondrion inner membrane. Its function is as follows. Component of the ubiquinol-cytochrome c reductase complex (complex III or cytochrome b-c1 complex) that is part of the mitochondrial respiratory chain. The b-c1 complex mediates electron transfer from ubiquinol to cytochrome c. Contributes to the generation of a proton gradient across the mitochondrial membrane that is then used for ATP synthesis. The chain is Cytochrome b (MT-CYB) from Rhinolophus hipposideros (Lesser horseshoe bat).